The chain runs to 57 residues: Small hydrophobic protein (57 aa).

Topologically, residues 1-8 (MPAIQPPL) are virion surface. Residues 9-29 (YLTFLLLILLYLIITLYVWTI) form a helical membrane-spanning segment. Over 30–57 (LTITYKTTVRYAALYQRSFSRWGFDQSL) the chain is Intravirion.

It belongs to the rubulavirus small hydrophobic protein family. In terms of assembly, interacts with host TNFRSF1A, RIPK1 and IRAK1; these interactions interfere with host NF-kappa-B activation at the level of receptor complexes. Interacts with host protein UBQLN4.

The protein localises to the virion membrane. It is found in the host cell membrane. In terms of biological role, plays a role in the inhibition of the host NF-kappa-B pathway. This inhibition occurs at the receptor level, by preventing the signaling of TNFR1 as well as IL-1R and TLR3. This is Small hydrophobic protein (SH) from Homo sapiens (Human).